Reading from the N-terminus, the 312-residue chain is Malate dehydrogenase (312 aa).

Residues 7-13 and Asp34 each bind NAD(+); that span reads GAAGGIG. Residues Arg81 and Arg87 each coordinate substrate. Residues Asn94 and 117–119 contribute to the NAD(+) site; that span reads ITN. Substrate contacts are provided by Asn119 and Arg153. His177 serves as the catalytic Proton acceptor. An NAD(+)-binding site is contributed by Met227.

The protein belongs to the LDH/MDH superfamily. MDH type 1 family. As to quaternary structure, homodimer.

The catalysed reaction is (S)-malate + NAD(+) = oxaloacetate + NADH + H(+). Its function is as follows. Catalyzes the reversible oxidation of malate to oxaloacetate. This is Malate dehydrogenase from Shigella flexneri serotype 5b (strain 8401).